The primary structure comprises 276 residues: Shikimate dehydrogenase (NADP(+)) (276 aa).

Residues 15-17 and Thr-62 each bind shikimate; that span reads SKS. Lys-66 (proton acceptor) is an active-site residue. Shikimate contacts are provided by Asn-87 and Asp-103. NADP(+)-binding positions include 127–131, 151–156, and Met-215; these read GAGGA and NRTLSK. Tyr-217 lines the shikimate pocket. Gly-239 is an NADP(+) binding site.

The protein belongs to the shikimate dehydrogenase family. As to quaternary structure, homodimer.

It carries out the reaction shikimate + NADP(+) = 3-dehydroshikimate + NADPH + H(+). It functions in the pathway metabolic intermediate biosynthesis; chorismate biosynthesis; chorismate from D-erythrose 4-phosphate and phosphoenolpyruvate: step 4/7. Its function is as follows. Involved in the biosynthesis of the chorismate, which leads to the biosynthesis of aromatic amino acids. Catalyzes the reversible NADPH linked reduction of 3-dehydroshikimate (DHSA) to yield shikimate (SA). This chain is Shikimate dehydrogenase (NADP(+)), found in Cellvibrio japonicus (strain Ueda107) (Pseudomonas fluorescens subsp. cellulosa).